Reading from the N-terminus, the 558-residue chain is Atlastin-1 (558 aa).

Residues 1-27 are disordered; the sequence is MAKNRRDRNSWGGFSEKTYEWSSEEEE. The segment at 1 to 34 is N-terminal hypervariable region (HVR); sequence MAKNRRDRNSWGGFSEKTYEWSSEEEEPVKKAGP. Residues 1 to 449 lie on the Cytoplasmic side of the membrane; the sequence is MAKNRRDRNS…NIFHAARTPA (449 aa). Residues Ser10, Ser22, and Ser23 each carry the phosphoserine modification. Residues 64-309 form the GB1/RHD3-type G domain; sequence DKEVVAVSVA…LIPWLLSPES (246 aa). GDP-binding residues include Arg77, Lys78, Gly79, Lys80, Ser81, Phe82, Gln148, Arg217, Asp218, Val276, and Asn279. Positions 77, 78, 79, 80, 81, and 82 each coordinate GTP. Ser81 serves as a coordination point for Mg(2+). The GTP site is built by Arg217, Asp218, and Val276. The tract at residues 347-438 is 3HB (three-helix bundle) domain; the sequence is MLQATAEANN…YIQYIKHNDS (92 aa). N6-acetyllysine is present on Lys395. Positions 412–439 form a coiled coil; it reads EFSRRYLQQLESEIDELYIQYIKHNDSK. Residues 439–447 are linker; sequence KNIFHAART. Residues 450–470 form a helical membrane-spanning segment; sequence TLFVVIFITYVIAGVTGFIGL. Position 471 (Asp471) is a topological domain, lumenal. A helical transmembrane segment spans residues 472–492; the sequence is IIASLCNMIMGLTLITLCTWA. The Cytoplasmic portion of the chain corresponds to 493–558; that stretch reads YIRYSGEYRE…STEQSEKKKM (66 aa). The autoinhibitory domain stretch occupies residues 521 to 558; it reads NEALYKLYSAAATHRHLYHQAFPTPKSESTEQSEKKKM.

The protein belongs to the TRAFAC class dynamin-like GTPase superfamily. GB1/RHD3 GTPase family. GB1 subfamily. As to quaternary structure, monomeric and homodimeric. The homodimer, transiently formed by two molecules on opposing membranes, is the active form mediating ER membrane fusion. Interacts with REEP1, REEP5, RTN3 and RTN4 (via the transmembrane region); these proteins are involved in endoplasmic reticulum tubular network organization. Interacts with ZFYVE27; both proteins are involved in endoplasmic reticulum tubular network organization. Interacts with ARL6IP1; both proteins are involved in endoplasmic reticulum tubular network organization. Interacts with SPAST; the interaction is direct, could recruit SPAST to Golgi membranes. Interacts (via N-terminal region) with MAP4K4 (via CNH regulatory domain). May interact with TMED2. Interacts with CPT1C. Post-translationally, phosphorylated. Phosphorylation, by different kinases, of the N-terminal hypervariable region (HVR) regulates the ATL1-mediated membrane tethering step.

It localises to the endoplasmic reticulum membrane. Its subcellular location is the golgi apparatus membrane. The protein resides in the cell projection. The protein localises to the axon. The catalysed reaction is GTP + H2O = GDP + phosphate + H(+). Its function is as follows. Atlastin-1 (ATL1) is a membrane-anchored GTPase that mediates the GTP-dependent fusion of endoplasmic reticulum (ER) membranes, maintaining the continuous ER network. It facilitates the formation of three-way junctions where ER tubules intersect. Two atlastin-1 on neighboring ER tubules bind GTP and form loose homodimers through the GB1/RHD3-type G domains and 3HB regions. Upon GTP hydrolysis, the 3HB regions tighten, pulling the membranes together to drive their fusion. After fusion, the homodimer disassembles upon release of inorganic phosphate (Pi). Subsequently, GDP dissociates, resetting the monomers to a conformation ready for a new fusion cycle. May also regulate more or less directly Golgi biogenesis. Indirectly regulates axonal development. This Macaca fascicularis (Crab-eating macaque) protein is Atlastin-1.